A 340-amino-acid chain; its full sequence is UDP-3-O-(3-hydroxymyristoyl)glucosamine N-acyltransferase (340 aa).

Residue His239 is the Proton acceptor of the active site.

It belongs to the transferase hexapeptide repeat family. LpxD subfamily. Homotrimer.

It carries out the reaction a UDP-3-O-[(3R)-3-hydroxyacyl]-alpha-D-glucosamine + a (3R)-hydroxyacyl-[ACP] = a UDP-2-N,3-O-bis[(3R)-3-hydroxyacyl]-alpha-D-glucosamine + holo-[ACP] + H(+). The catalysed reaction is UDP-3-O-[(3R)-3-hydroxytetradecanoyl]-alpha-D-glucosamine + (3R)-hydroxytetradecanoyl-[ACP] = UDP-2-N,3-O-bis[(3R)-3-hydroxytetradecanoyl]-alpha-D-glucosamine + holo-[ACP] + H(+). It functions in the pathway glycolipid biosynthesis; lipid IV(A) biosynthesis; lipid IV(A) from (3R)-3-hydroxytetradecanoyl-[acyl-carrier-protein] and UDP-N-acetyl-alpha-D-glucosamine: step 3/6. Its function is as follows. Catalyzes the N-acylation of UDP-3-O-(hydroxytetradecanoyl)glucosamine using 3-hydroxytetradecanoyl-ACP as the acyl donor. Is involved in the biosynthesis of lipid A, a phosphorylated glycolipid that anchors the lipopolysaccharide to the outer membrane of the cell. This chain is UDP-3-O-(3-hydroxymyristoyl)glucosamine N-acyltransferase, found in Yersinia enterocolitica.